Reading from the N-terminus, the 591-residue chain is Aspartate--tRNA(Asp/Asn) ligase (591 aa).

E174 is an L-aspartate binding site. An aspartate region spans residues 198 to 201 (QLFK). R220 is an L-aspartate binding site. Residues 220-222 (RDE) and Q229 each bind ATP. Residue H450 coordinates L-aspartate. Position 483 (E483) interacts with ATP. R490 is an L-aspartate binding site. 535–538 (GLDR) is a binding site for ATP.

This sequence belongs to the class-II aminoacyl-tRNA synthetase family. Type 1 subfamily. Homodimer.

It is found in the cytoplasm. It catalyses the reaction tRNA(Asx) + L-aspartate + ATP = L-aspartyl-tRNA(Asx) + AMP + diphosphate. Aspartyl-tRNA synthetase with relaxed tRNA specificity since it is able to aspartylate not only its cognate tRNA(Asp) but also tRNA(Asn). Reaction proceeds in two steps: L-aspartate is first activated by ATP to form Asp-AMP and then transferred to the acceptor end of tRNA(Asp/Asn). This Pseudomonas fluorescens (strain Pf0-1) protein is Aspartate--tRNA(Asp/Asn) ligase.